Consider the following 203-residue polypeptide: Putative 3-methyladenine DNA glycosylase (203 aa).

Belongs to the DNA glycosylase MPG family.

The protein is Putative 3-methyladenine DNA glycosylase of Clostridium botulinum (strain ATCC 19397 / Type A).